We begin with the raw amino-acid sequence, 195 residues long: MSKQEKSNVEDKSLDIETAVQVETAQESASGALEELSVEEQLERAKDTIKELEDSCDQFKDEALRAKAEMENIRKRAERDVSNARKFGIEKFAKELLPVIDSIGQALKHEVKHEEAIAMKEGIELTAKMLVDILKKNGVEELDPKGEKFDPNLHEAMAMIPNPEFEDNTIFDVFQKGYMLNGRIVRAAKVVIVKN.

This sequence belongs to the GrpE family. As to quaternary structure, homodimer.

It localises to the cytoplasm. Its function is as follows. Participates actively in the response to hyperosmotic and heat shock by preventing the aggregation of stress-denatured proteins, in association with DnaK and GrpE. It is the nucleotide exchange factor for DnaK and may function as a thermosensor. Unfolded proteins bind initially to DnaJ; upon interaction with the DnaJ-bound protein, DnaK hydrolyzes its bound ATP, resulting in the formation of a stable complex. GrpE releases ADP from DnaK; ATP binding to DnaK triggers the release of the substrate protein, thus completing the reaction cycle. Several rounds of ATP-dependent interactions between DnaJ, DnaK and GrpE are required for fully efficient folding. This chain is Protein GrpE, found in Francisella tularensis subsp. mediasiatica (strain FSC147).